A 513-amino-acid polypeptide reads, in one-letter code: MTPAHKVLLCILDGWGIRQERDNNAIVLAGTPHLDKLASPYPFTELQTAGLAVGLPEGQMGNSEVGHTNIGAGRIVYQDLVRINRAAESGELAQNPVLRAALDGVKADGKALHLLGLVSPGGVHSSMDHLFALLKAAKERNVAHVYVHAFLDGRDTPPQSALGYVEELERFLHETHTGRIATVTGRFYAMDRDKRWDRVHQAYEALVFGRGPKAPDALSAIRASYAEKVTDEFVKPTVLAAGDGTPVGRIQDGDAVIFFNFRADRARELTQALAFPEFKEFDRGGLRLGRYVCMTQYDETFKLPALFEPDQPQDIFPELLSRQGLRQFRTAETEKYAHVTFFFNGGREVVYAGEDRHLVPSPRDVKTYDLKPEMSAYEVTAELVKRLDSGKYDFALVNFANPDMVGHSGRLDAAMKAVKAVDECLGALGKACERNGWVLAISADHGNCEQMVDLETGEPHTAHTLNPVPFHLIHPDFRGQKLRPGILADIAPTLCKVMGLPQSKEMNRQGLLP.

Positions 13 and 63 each coordinate Mn(2+). The active-site Phosphoserine intermediate is Ser63. Residues His124, 154–155 (RD), Arg186, Arg192, 262–265 (RADR), and Lys335 each bind substrate. Positions 403, 407, 444, 445, and 463 each coordinate Mn(2+).

This sequence belongs to the BPG-independent phosphoglycerate mutase family. In terms of assembly, monomer. Mn(2+) is required as a cofactor.

The catalysed reaction is (2R)-2-phosphoglycerate = (2R)-3-phosphoglycerate. It participates in carbohydrate degradation; glycolysis; pyruvate from D-glyceraldehyde 3-phosphate: step 3/5. In terms of biological role, catalyzes the interconversion of 2-phosphoglycerate and 3-phosphoglycerate. In Myxococcus xanthus (strain DK1622), this protein is 2,3-bisphosphoglycerate-independent phosphoglycerate mutase.